Consider the following 252-residue polypeptide: Imidazole glycerol phosphate synthase subunit HisF (252 aa).

Residues Asp11 and Asp130 contribute to the active site.

It belongs to the HisA/HisF family. As to quaternary structure, heterodimer of HisH and HisF.

It is found in the cytoplasm. It catalyses the reaction 5-[(5-phospho-1-deoxy-D-ribulos-1-ylimino)methylamino]-1-(5-phospho-beta-D-ribosyl)imidazole-4-carboxamide + L-glutamine = D-erythro-1-(imidazol-4-yl)glycerol 3-phosphate + 5-amino-1-(5-phospho-beta-D-ribosyl)imidazole-4-carboxamide + L-glutamate + H(+). It functions in the pathway amino-acid biosynthesis; L-histidine biosynthesis; L-histidine from 5-phospho-alpha-D-ribose 1-diphosphate: step 5/9. Its function is as follows. IGPS catalyzes the conversion of PRFAR and glutamine to IGP, AICAR and glutamate. The HisF subunit catalyzes the cyclization activity that produces IGP and AICAR from PRFAR using the ammonia provided by the HisH subunit. In Petrotoga mobilis (strain DSM 10674 / SJ95), this protein is Imidazole glycerol phosphate synthase subunit HisF.